A 275-amino-acid chain; its full sequence is Translation initiation factor 2 subunit alpha (275 aa).

Residues 12 to 83 form the S1 motif domain; it reads GEFVVATVKR…RKGHIDLSLR (72 aa).

Belongs to the eIF-2-alpha family. In terms of assembly, heterotrimer composed of an alpha, a beta and a gamma chain.

In terms of biological role, eIF-2 functions in the early steps of protein synthesis by forming a ternary complex with GTP and initiator tRNA. The sequence is that of Translation initiation factor 2 subunit alpha (eif2a) from Pyrococcus abyssi (strain GE5 / Orsay).